The chain runs to 63 residues: UPF0337 protein RA1131 (63 aa).

The disordered stretch occupies residues 1–63 (MGSAKDKVAG…DAVKGAVDKT (63 aa)). The segment covering 34 to 49 (AKGAAQEAKGGAQQAK) has biased composition (low complexity). The span at 51-63 (KLKDAVKGAVDKT) shows a compositional bias: basic and acidic residues.

It belongs to the UPF0337 (CsbD) family.

In Rhizobium meliloti (strain 1021) (Ensifer meliloti), this protein is UPF0337 protein RA1131.